The primary structure comprises 540 residues: GMP synthase [glutamine-hydrolyzing] (540 aa).

The Glutamine amidotransferase type-1 domain occupies 26–216 (LIIILDFGSQ…VYHICDCEPT (191 aa)). The Nucleophile role is filled by C103. Active-site residues include H190 and E192. One can recognise a GMPS ATP-PPase domain in the interval 217 to 415 (WTTAAFVEEA…IGLPEEIVQR (199 aa)). 244–250 (SGGVDSS) provides a ligand contact to ATP.

Homodimer.

It carries out the reaction XMP + L-glutamine + ATP + H2O = GMP + L-glutamate + AMP + diphosphate + 2 H(+). Its pathway is purine metabolism; GMP biosynthesis; GMP from XMP (L-Gln route): step 1/1. Its function is as follows. Catalyzes the synthesis of GMP from XMP. In Nostoc punctiforme (strain ATCC 29133 / PCC 73102), this protein is GMP synthase [glutamine-hydrolyzing].